The primary structure comprises 405 residues: Plasma serine protease inhibitor (405 aa).

A signal peptide spans 1–19 (MRFFPILCLVLFISHGVAS). A propeptide spans 20 to 24 (RRHSH) (removed in mature form). N-linked (GlcNAc...) asparagine glycosylation occurs at N247.

The protein belongs to the serpin family. As to quaternary structure, forms protease inhibiting heterodimers in extracellular body fluids with serine proteases such as activated protein C/coagulation factor V/F5, acrosin/ACR, chymotrypsinogen B/CTRB1, prothrombin/F2, factor Xa/F10, factor XI/F11, kallikrein/KLKB1, tissue kallikrein, trypsin/PRSS1, prostate specific antigen/KLK3, tissue plasminogen activator/PLAT and urinary plasminogen activator/PLAU. Forms membrane-anchored serine proteases inhibiting heterodimers with TMPRSS7 and TMPRSS11E. Interacts with SEMG2. In terms of processing, N-glycosylated; glycans consist of a mixture of sialylated bi- (including sialyl-Lewis X epitopes), tri- and tetra-antennary complex-type chains; affects the maximal heparin- and thrombomodulin-enhanced rates of thrombin inhibition. O-glycosylated; further modified with 2 sialic acid residues. Proteolytically cleaved at the N-terminus; inhibits slightly the heparin- and thrombomodulin-enhanced rates of thrombin inhibition. Proteolytically cleaved. Inhibition of proteases is accompanied by formation of a stable enzyme-inhibitor complex and by degradation of the serpin to lower molecular weight derivatives. In terms of tissue distribution, not detected in blood plasma (at protein level). Expressed in testis, epididymis, seminal vesicles, prostate and ovaries.

The protein localises to the secreted. The protein resides in the extracellular space. With respect to regulation, its inhibitory activity is greatly enhanced in the presence of glycosaminoglycans, heparin, thrombomodulin and phospholipids vesicles. Heparin-dependent serine protease inhibitor acting in body fluids and secretions. Inactivates serine proteases by binding irreversibly to their serine activation site. Involved in the regulation of intravascular and extravascular proteolytic activities. Plays hemostatic roles in the blood plasma. Acts as a procoagulant and pro-inflammatory factor by inhibiting the anticoagulant activated protein C factor as well as the generation of activated protein C factor by the thrombin/thrombomodulin complex. Acts as an anticoagulant factor by inhibiting blood coagulation factors like prothrombin, factor XI, factor Xa, plasma kallikrein and fibrinolytic enzymes such as tissue- and urinary-type plasminogen activators. In seminal plasma, inactivates several serine proteases implicated in the reproductive system. Inhibits the serpin acrosin; indirectly protects component of the male genital tract from being degraded by excessive released acrosin. Inhibits tissue- and urinary-type plasminogen activator, prostate-specific antigen and kallikrein activities; has a control on the sperm motility and fertilization. Inhibits the activated protein C-catalyzed degradation of SEMG1 and SEMG2; regulates the degradation of semenogelin during the process of transfer of spermatozoa from the male reproductive tract into the female tract. In urine, inhibits urinary-type plasminogen activator and kallikrein activities. Inactivates membrane-anchored serine proteases activities such as MPRSS7 and TMPRSS11E. Inhibits urinary-type plasminogen activator-dependent tumor cell invasion and metastasis. May also play a non-inhibitory role in seminal plasma and urine as a hydrophobic hormone carrier by its binding to retinoic acid. The chain is Plasma serine protease inhibitor (Serpina5) from Mus musculus (Mouse).